The sequence spans 266 residues: tRNA pseudouridine synthase A (266 aa).

Asp57 serves as the catalytic Nucleophile. Tyr115 lines the substrate pocket.

It belongs to the tRNA pseudouridine synthase TruA family. In terms of assembly, homodimer.

It catalyses the reaction uridine(38/39/40) in tRNA = pseudouridine(38/39/40) in tRNA. Functionally, formation of pseudouridine at positions 38, 39 and 40 in the anticodon stem and loop of transfer RNAs. The polypeptide is tRNA pseudouridine synthase A (Buchnera aphidicola subsp. Acyrthosiphon pisum (strain Tuc7)).